A 386-amino-acid chain; its full sequence is Methylthioribose-1-phosphate isomerase (386 aa).

The Proton donor role is filled by D258.

Belongs to the eIF-2B alpha/beta/delta subunits family. MtnA subfamily.

The protein localises to the cytoplasm. It is found in the nucleus. It catalyses the reaction 5-(methylsulfanyl)-alpha-D-ribose 1-phosphate = 5-(methylsulfanyl)-D-ribulose 1-phosphate. It participates in amino-acid biosynthesis; L-methionine biosynthesis via salvage pathway; L-methionine from S-methyl-5-thio-alpha-D-ribose 1-phosphate: step 1/6. Its function is as follows. Catalyzes the interconversion of methylthioribose-1-phosphate (MTR-1-P) into methylthioribulose-1-phosphate (MTRu-1-P). The chain is Methylthioribose-1-phosphate isomerase from Postia placenta (strain ATCC 44394 / Madison 698-R) (Brown rot fungus).